Consider the following 174-residue polypeptide: Inosine/xanthosine triphosphatase (174 aa).

D68 is a binding site for Mg(2+). Substrate is bound at residue 68–69; that stretch reads DA.

The protein belongs to the YjjX NTPase family. As to quaternary structure, homodimer. Mg(2+) serves as cofactor. Mn(2+) is required as a cofactor.

The catalysed reaction is XTP + H2O = XDP + phosphate + H(+). The enzyme catalyses ITP + H2O = IDP + phosphate + H(+). Functionally, phosphatase that hydrolyzes non-canonical purine nucleotides such as XTP and ITP to their respective diphosphate derivatives. Probably excludes non-canonical purines from DNA/RNA precursor pool, thus preventing their incorporation into DNA/RNA and avoiding chromosomal lesions. The chain is Inosine/xanthosine triphosphatase from Photobacterium profundum (strain SS9).